A 258-amino-acid polypeptide reads, in one-letter code: Deoxyribose-phosphate aldolase (258 aa).

Residue Asp101 is the Proton donor/acceptor of the active site. The active-site Schiff-base intermediate with acetaldehyde is Lys166. The active-site Proton donor/acceptor is Lys200.

This sequence belongs to the DeoC/FbaB aldolase family. DeoC type 2 subfamily.

Its subcellular location is the cytoplasm. The enzyme catalyses 2-deoxy-D-ribose 5-phosphate = D-glyceraldehyde 3-phosphate + acetaldehyde. Its pathway is carbohydrate degradation; 2-deoxy-D-ribose 1-phosphate degradation; D-glyceraldehyde 3-phosphate and acetaldehyde from 2-deoxy-alpha-D-ribose 1-phosphate: step 2/2. Its function is as follows. Catalyzes a reversible aldol reaction between acetaldehyde and D-glyceraldehyde 3-phosphate to generate 2-deoxy-D-ribose 5-phosphate. The sequence is that of Deoxyribose-phosphate aldolase from Actinobacillus pleuropneumoniae serotype 7 (strain AP76).